The chain runs to 506 residues: Tabersonine 16-hydroxylase 1 (506 aa).

Residues 1–21 (MEFYYFLYLAFLLFCFILSKT) form a helical membrane-spanning segment. Residue cysteine 447 participates in heme binding.

It belongs to the cytochrome P450 family. Requires heme as cofactor. Predominantly expressed in young leaves of mature plants. Low expression in roots and flowers, but not detected in stems and old leaves. Found predominantly in leaf epidermis. Barely detected in roots, internodes, young and mature leaves, and flower buds, but relatively abundant in fully developed flowers. Not detected in leaf epidermal cells.

It localises to the endoplasmic reticulum membrane. It catalyses the reaction (-)-tabersonine + reduced [NADPH--hemoprotein reductase] + O2 = 16-hydroxytabersonine + oxidized [NADPH--hemoprotein reductase] + H2O + H(+). It participates in alkaloid biosynthesis; vindoline biosynthesis. Functionally, involved in the flower biosynthesis of vindoline, a precursor of vinblastine and vincristine. Hydroxylates specifically tabersonine, 2,3-dihydrotabersonine and 2,3-dihydro-3-hydroxytabersonine, but has no activity with naringenin, tryptamine, secologanin, strictosidine, ajmalicine, vindoline and catharanthine. The protein is Tabersonine 16-hydroxylase 1 of Catharanthus roseus (Madagascar periwinkle).